Here is a 336-residue protein sequence, read N- to C-terminus: NADH-quinone oxidoreductase subunit H (336 aa).

Transmembrane regions (helical) follow at residues 12–32, 84–104, 118–138, 156–176, 193–213, 247–267, 274–294, and 313–333; these read FLKI…LTWF, VVMA…GPGF, VNIA…GTIF, AAVV…VILL, GVWF…CMLA, LAEW…LFFG, IFGP…LVFF, and IAWK…AVVV.

It belongs to the complex I subunit 1 family. In terms of assembly, NDH-1 is composed of 14 different subunits. Subunits NuoA, H, J, K, L, M, N constitute the membrane sector of the complex.

The protein resides in the cell inner membrane. The enzyme catalyses a quinone + NADH + 5 H(+)(in) = a quinol + NAD(+) + 4 H(+)(out). Functionally, NDH-1 shuttles electrons from NADH, via FMN and iron-sulfur (Fe-S) centers, to quinones in the respiratory chain. The immediate electron acceptor for the enzyme in this species is believed to be ubiquinone. Couples the redox reaction to proton translocation (for every two electrons transferred, four hydrogen ions are translocated across the cytoplasmic membrane), and thus conserves the redox energy in a proton gradient. This subunit may bind ubiquinone. This is NADH-quinone oxidoreductase subunit H from Aquifex aeolicus (strain VF5).